We begin with the raw amino-acid sequence, 256 residues long: MKTIDLNCDFGESFGVYRLGKEEILPYITSVNIACGFHAGDPLVMRQTVQLAIRHGVAIGAHPGFPDLLGFGRRMMAVSPEEVYAYVVYQIGALAAFVKAEGGVMTHVKPHGALYNMAAKDARISEAIAKAVYDVDPTLILYGLAGSELIRAGQAQGLQTASEVFADRTYQADGSLTPRSDPQAIIADEDEAVKQVLMMVCDRHVRSVQGTAVAIEADTVCLHGDNEQAVRFAKRLHAALQNEGIAIQAMRKETRR.

This sequence belongs to the LamB/PxpA family. Forms a complex composed of PxpA, PxpB and PxpC.

The enzyme catalyses 5-oxo-L-proline + ATP + 2 H2O = L-glutamate + ADP + phosphate + H(+). In terms of biological role, catalyzes the cleavage of 5-oxoproline to form L-glutamate coupled to the hydrolysis of ATP to ADP and inorganic phosphate. The chain is 5-oxoprolinase subunit A from Geobacillus thermodenitrificans (strain NG80-2).